We begin with the raw amino-acid sequence, 208 residues long: Protein-L-isoaspartate O-methyltransferase (208 aa).

The active site involves Ser59.

This sequence belongs to the methyltransferase superfamily. L-isoaspartyl/D-aspartyl protein methyltransferase family.

The protein resides in the cytoplasm. It carries out the reaction [protein]-L-isoaspartate + S-adenosyl-L-methionine = [protein]-L-isoaspartate alpha-methyl ester + S-adenosyl-L-homocysteine. In terms of biological role, catalyzes the methyl esterification of L-isoaspartyl residues in peptides and proteins that result from spontaneous decomposition of normal L-aspartyl and L-asparaginyl residues. It plays a role in the repair and/or degradation of damaged proteins. In Cronobacter sakazakii (strain ATCC BAA-894) (Enterobacter sakazakii), this protein is Protein-L-isoaspartate O-methyltransferase.